Consider the following 119-residue polypeptide: Large ribosomal subunit protein bL20 (119 aa).

Belongs to the bacterial ribosomal protein bL20 family.

Its function is as follows. Binds directly to 23S ribosomal RNA and is necessary for the in vitro assembly process of the 50S ribosomal subunit. It is not involved in the protein synthesizing functions of that subunit. The polypeptide is Large ribosomal subunit protein bL20 (Burkholderia ambifaria (strain MC40-6)).